We begin with the raw amino-acid sequence, 1108 residues long: cGMP-inhibited 3',5'-cyclic phosphodiesterase 3B (1108 aa).

The segment covering 1-11 has biased composition (basic and acidic residues); sequence MRKDERERDTP. Residues 1–32 are disordered; that stretch reads MRKDERERDTPAMRSPPPPPPPATATAASPPE. The segment at 1–32 is interaction with RAPGEF3; the sequence is MRKDERERDTPAMRSPPPPPPPATATAASPPE. The span at 14–23 shows a compositional bias: pro residues; that stretch reads RSPPPPPPPA. A Phosphoserine modification is found at S15. The next 6 membrane-spanning stretches (helical) occupy residues 73–93, 114–134, 144–164, 175–195, 204–224, and 231–251; these read AGAR…LLGA, LSLS…CFLT, AGSW…FAAW, AAAA…LTLA, VLVL…LGAL, and LLSC…DHFF. S279 is modified (phosphoserine; by PKB/AKT1 or PKB/AKT2). Phosphoserine is present on residues S280 and S427. The interval 405–448 is disordered; sequence DRKLHKGLSSKPSFPTAQLRRSSGASGLLTSEHHSRWDRSGGKR. Polar residues predominate over residues 414-433; it reads SKPSFPTAQLRRSSGASGLL. The segment at 421–445 is interaction with PIK3R6; the sequence is AQLRRSSGASGLLTSEHHSRWDRSG. Positions 435–445 are enriched in basic and acidic residues; that stretch reads SEHHSRWDRSG. Residues 633–1070 form the PDEase domain; it reads PNIDQEVLLD…KIWKEIIEEE (438 aa). The active-site Proton donor is H719. AMP is bound at residue H719. Mg(2+) is bound by residues H723, H803, D804, and D919. D804, D919, and Q970 together coordinate AMP. The segment covering 999–1033 has biased composition (acidic residues); that stretch reads EEGDDTESDDDDDDDDDDDDDDDEELDSDDEETED. A disordered region spans residues 999-1042; the sequence is EEGDDTESDDDDDDDDDDDDDDDEELDSDDEETEDNLNPKPQRR.

Belongs to the cyclic nucleotide phosphodiesterase family. PDE3 subfamily. In terms of assembly, homodimer. Interacts with PIK3CG; regulates PDE3B activity and thereby cAMP levels in cells. Interacts with RAPGEF3 and PIK3R6; form a signaling complex that regulates phosphatidylinositol 3-kinase gamma in angiogenesis. Interacts with ABHD15; this interaction regulates PDE3B's stability and expression and, thereby, impacts the antilipolytic action of insulin. Mg(2+) is required as a cofactor. Requires Mn(2+) as cofactor. In terms of processing, phosphorylation at Ser-279 mediates insulin-induced activation of PDE3B. As to expression, abundant in adipose tissues.

The protein resides in the membrane. It carries out the reaction a nucleoside 3',5'-cyclic phosphate + H2O = a nucleoside 5'-phosphate + H(+). The enzyme catalyses 3',5'-cyclic AMP + H2O = AMP + H(+). The catalysed reaction is 3',5'-cyclic GMP + H2O = GMP + H(+). Inhibited by cGMP. Cyclic nucleotide phosphodiesterase with a dual-specificity for the second messengers cAMP and cGMP, which are key regulators of many important physiological processes. Regulates angiogenesis by inhibiting the cAMP-dependent guanine nucleotide exchange factor RAPGEF3 and downstream phosphatidylinositol 3-kinase gamma-mediated signaling. Controls cardiac contractility by reducing cAMP concentration in cardiocytes. In Rattus norvegicus (Rat), this protein is cGMP-inhibited 3',5'-cyclic phosphodiesterase 3B.